The sequence spans 39 residues: Contryphan-Cal1 (39 aa).

The first 20 residues, 1–20 (MTRTAVLLLTLLFLVAMAAS), serve as a signal peptide directing secretion. A disulfide bridge links Cys-29 with Cys-35.

In terms of tissue distribution, expressed by the venom duct.

Its subcellular location is the secreted. Functionally, probable neurotoxin. The polypeptide is Contryphan-Cal1 (Californiconus californicus (California cone)).